The sequence spans 629 residues: Phosphomethylpyrimidine synthase (629 aa).

Residues 1–13 (MTTKSKNAINLSD) are compositionally biased toward polar residues. The disordered stretch occupies residues 1 to 22 (MTTKSKNAINLSDSAKVDEQSV). Substrate contacts are provided by residues Asn-233, Met-262, Tyr-291, His-327, 347–349 (SRG), 388–391 (DGLR), and Glu-427. His-431 lines the Zn(2+) pocket. Tyr-454 lines the substrate pocket. A Zn(2+)-binding site is contributed by His-495. Positions 575, 578, and 583 each coordinate [4Fe-4S] cluster.

Belongs to the ThiC family. As to quaternary structure, homodimer. [4Fe-4S] cluster is required as a cofactor.

The catalysed reaction is 5-amino-1-(5-phospho-beta-D-ribosyl)imidazole + S-adenosyl-L-methionine = 4-amino-2-methyl-5-(phosphooxymethyl)pyrimidine + CO + 5'-deoxyadenosine + formate + L-methionine + 3 H(+). The protein operates within cofactor biosynthesis; thiamine diphosphate biosynthesis. Its function is as follows. Catalyzes the synthesis of the hydroxymethylpyrimidine phosphate (HMP-P) moiety of thiamine from aminoimidazole ribotide (AIR) in a radical S-adenosyl-L-methionine (SAM)-dependent reaction. The polypeptide is Phosphomethylpyrimidine synthase (Pseudomonas fluorescens (strain Pf0-1)).